A 465-amino-acid chain; its full sequence is MLSENEIKILDFLKRRKESTSQEIAEGTGLPLSSVFSIIATLESKGIVKVISEETRKVVRLTDEGKLRTEQGLPEDRLVTLLNGRPLKIQELRNALGKDFEIGFGWARRKGLITLENDTVIPKVSQYVSPEYTALKDLQAGKEPTGEVLEILLRRKLVEVKEEKMLRVQLLREVETRPAELYVTHEMLTTGSWREYEFKPYNVEANPPFFPIGKTHYFRDFIEKVKDLMVGLGFVEVSGDFVETEFFNFDMLFQPQDHPAREIHDSFVIEGKGNLPGSDLVRKVKEVHEKWWRYSWSEDNARRLVLRSQTTAVTARVLSGAPKRIRAFTIGKVFRPDSIDATHLIEFHQMDGLVIEEDFTFRDLLSTLRDIFQGLGVKQVKFKPGYFPFTEPSVEVYGFIEGLGWVEMAGAGLLRKEVTEPAGVFSPAGAWGIGIDRLAMLFLGVKDIRDLYSLDIEYLRSRRVI.

L-phenylalanine is bound by residues Thr311 and Phe389. A Mg(2+)-binding site is contributed by Glu391.

It belongs to the class-II aminoacyl-tRNA synthetase family. Phe-tRNA synthetase alpha subunit type 2 subfamily. As to quaternary structure, tetramer of two alpha and two beta subunits. The cofactor is Mg(2+).

It localises to the cytoplasm. It catalyses the reaction tRNA(Phe) + L-phenylalanine + ATP = L-phenylalanyl-tRNA(Phe) + AMP + diphosphate + H(+). The sequence is that of Phenylalanine--tRNA ligase alpha subunit from Metallosphaera sedula (strain ATCC 51363 / DSM 5348 / JCM 9185 / NBRC 15509 / TH2).